The chain runs to 165 residues: Large ribosomal subunit protein uL10 (165 aa).

This sequence belongs to the universal ribosomal protein uL10 family. In terms of assembly, part of the ribosomal stalk of the 50S ribosomal subunit. The N-terminus interacts with L11 and the large rRNA to form the base of the stalk. The C-terminus forms an elongated spine to which L12 dimers bind in a sequential fashion forming a multimeric L10(L12)X complex.

Forms part of the ribosomal stalk, playing a central role in the interaction of the ribosome with GTP-bound translation factors. This chain is Large ribosomal subunit protein uL10, found in Pectobacterium atrosepticum (strain SCRI 1043 / ATCC BAA-672) (Erwinia carotovora subsp. atroseptica).